We begin with the raw amino-acid sequence, 445 residues long: MSEYLSVTSLTKYIKYKFDQDPHLQSVLIKGELSNFKKHSSGHLYFNVKDKNSVISAMMFKGNASKIDFEPKEGDEVLLEARVSVYERRGNYQIYVNKMHMDGIGNLYQKLEQLKKKLTKEGFFDQNHKKVIPKFPQKIAVLTAGTGAAIRDIHTTINSRYPLAEQVQINTLVQGEQAKSDIIEKINQADALNVDTIIIGRGGGSIEDLWNFNEEDVVKAIYNCQTPIISAVGHETDFTLSDFVADVRAATPTQAAVMATPDQYELRQYLQQANLSLTRFIKQYMQQKRKHLEHVASYYKFQTPSLLYDQQIQKRDDLEKQLKLSLNLKIKNQQQQLQLLFNNFNLKTFKQRIKRDQLTNNQKRVELSKVMHNLLDNQKNNLARKLENLNNLSPTNTMLRGYTIVNKDDKVITSTKDLAENDNIVLTMKDGVVDAQVKKVRCNDE.

The protein belongs to the XseA family. Heterooligomer composed of large and small subunits.

It is found in the cytoplasm. It carries out the reaction Exonucleolytic cleavage in either 5'- to 3'- or 3'- to 5'-direction to yield nucleoside 5'-phosphates.. Functionally, bidirectionally degrades single-stranded DNA into large acid-insoluble oligonucleotides, which are then degraded further into small acid-soluble oligonucleotides. This chain is Exodeoxyribonuclease 7 large subunit, found in Staphylococcus saprophyticus subsp. saprophyticus (strain ATCC 15305 / DSM 20229 / NCIMB 8711 / NCTC 7292 / S-41).